The primary structure comprises 65 residues: DNA gyrase inhibitor YacG (65 aa).

Residues Cys8, Cys11, Cys27, and Cys31 each coordinate Zn(2+). A disordered region spans residues 43–65 (SYRIPDTGKDSEKQENDPSGSEK). Basic and acidic residues predominate over residues 48–65 (DTGKDSEKQENDPSGSEK).

This sequence belongs to the DNA gyrase inhibitor YacG family. Interacts with GyrB. Zn(2+) serves as cofactor.

Inhibits all the catalytic activities of DNA gyrase by preventing its interaction with DNA. Acts by binding directly to the C-terminal domain of GyrB, which probably disrupts DNA binding by the gyrase. In Nitrosospira multiformis (strain ATCC 25196 / NCIMB 11849 / C 71), this protein is DNA gyrase inhibitor YacG.